Reading from the N-terminus, the 370-residue chain is Quinolinate synthase (370 aa).

The iminosuccinate site is built by histidine 62 and serine 83. Position 128 (cysteine 128) interacts with [4Fe-4S] cluster. Iminosuccinate contacts are provided by residues 154–156 (YAN) and serine 171. [4Fe-4S] cluster is bound at residue cysteine 215. Iminosuccinate is bound by residues 241-243 (HPE) and threonine 258. Residue cysteine 312 coordinates [4Fe-4S] cluster.

This sequence belongs to the quinolinate synthase family. Type 1 subfamily. [4Fe-4S] cluster is required as a cofactor.

The protein resides in the cytoplasm. It carries out the reaction iminosuccinate + dihydroxyacetone phosphate = quinolinate + phosphate + 2 H2O + H(+). It participates in cofactor biosynthesis; NAD(+) biosynthesis; quinolinate from iminoaspartate: step 1/1. Catalyzes the condensation of iminoaspartate with dihydroxyacetone phosphate to form quinolinate. The chain is Quinolinate synthase from Neisseria gonorrhoeae (strain ATCC 700825 / FA 1090).